The sequence spans 370 residues: Protein FAM110B (370 aa).

2 disordered regions span residues serine 127 to alanine 151 and lysine 237 to leucine 256. Phosphoserine occurs at positions 238 and 301. Residues aspartate 317–arginine 337 form a disordered region. Residues serine 326–asparagine 335 show a composition bias toward basic and acidic residues.

This sequence belongs to the FAM110 family.

The protein resides in the cytoplasm. It localises to the cytoskeleton. Its subcellular location is the microtubule organizing center. It is found in the centrosome. The polypeptide is Protein FAM110B (FAM110B) (Pongo abelii (Sumatran orangutan)).